The following is a 142-amino-acid chain: Taurine up-regulated 1 protein (142 aa).

The signal sequence occupies residues 1–40 (MARPPPLPGLVGRRSGRAVDRAIGWRLFLLLWHPALGAQA). Topologically, residues 41 to 123 (RPPRRAPGGR…ARTQLEGQEG (83 aa)) are extracellular. A helical transmembrane segment spans residues 124–140 (AGGWLVVGFLLCLFLLM). Topologically, residues 141–142 (PP) are cytoplasmic.

In terms of tissue distribution, widely expressed in the adult with highest levels in placenta and testis. Also expressed in a number of embryonic tissues at multiple embryonic stages.

The protein resides in the nucleus membrane. It is found in the mitochondrion membrane. The protein localises to the cytoplasm. The sequence is that of Taurine up-regulated 1 protein from Mus musculus (Mouse).